The chain runs to 337 residues: G-protein coupled receptor 26 (337 aa).

The Extracellular portion of the chain corresponds to 1–10 (MNSWDAGLAG). The helical transmembrane segment at 11-31 (LLVGTIGVSLLSNGLVLLCLL) threads the bilayer. The Cytoplasmic portion of the chain corresponds to 32 to 47 (HSADIRRQAPALFTLN). A helical membrane pass occupies residues 48 to 68 (LTCGNLLCTVVNMPLTLAGVV). Topologically, residues 69–81 (AQRQPAGDRLCRL) are extracellular. Cysteine 79 and cysteine 156 form a disulfide bridge. Residues 82-102 (AAFLDTFLAANSMLSMAALSI) form a helical membrane-spanning segment. Residues 103-123 (DRWVAVVFPLSYRAKMRLRDA) lie on the Cytoplasmic side of the membrane. Residues 124–144 (AFMVAYTWLHALTFPATALAL) traverse the membrane as a helical segment. Over 145 to 168 (SWLGFHQLYASCTLCSRRPDERLR) the chain is Extracellular. A helical transmembrane segment spans residues 169–189 (FAVFTSAFHALSFLLSFIVLC). Over 190–245 (FTYLKVLKVARFHCKRIDVITMQTLVLLVDIHPSVRERCLEEQKRRRQRATKKIST) the chain is Cytoplasmic. The helical transmembrane segment at 246–266 (FIGTFLVCFAPYVITRLVELF) threads the bilayer. Residues 267-276 (STAPIGSHWG) lie on the Extracellular side of the membrane. A helical membrane pass occupies residues 277-297 (VLSKCLAYSKAASDPFVYSLL). Residues 298–337 (RHQYRRSCKELLNRIFNRRSLHSVGLTGDSHSQNILPVSE) are Cytoplasmic-facing.

It belongs to the G-protein coupled receptor 1 family. Exclusively expressed in the brain. Prominent expression is detected throughout the entire neocortex at all rostrocaudal and dorsoventral levels. Strong expression is detected in olfactory and auditory sensory areas.

The protein resides in the cell membrane. Functionally, orphan receptor. Displays a significant level of constitutive activity. Its effect is mediated by G(s)-alpha protein that stimulate adenylate cyclase, resulting in an elevation of intracellular cAMP. The sequence is that of G-protein coupled receptor 26 (Gpr26) from Mus musculus (Mouse).